The following is an 87-amino-acid chain: Omega-lycotoxin-Am1g (87 aa).

Positions 1 to 17 are cleaved as a signal peptide; sequence MKLSIFFVLFFIAIAYC. A propeptide spanning residues 18–40 is cleaved from the precursor; sequence QPEFLDDEEDEVEETLPVAEEGR. Cystine bridges form between cysteine 44–cysteine 59, cysteine 51–cysteine 64, cysteine 58–cysteine 84, and cysteine 66–cysteine 82.

This sequence belongs to the neurotoxin omega-lctx family. As to expression, expressed by the venom gland.

It is found in the secreted. Its function is as follows. Modulates Cav2.1/CACNA1A voltage-gated calcium channels (P/Q-type currents) in rat cerebellar Purkinje cells and hippocampal CA1-CA3 neurons. At saturating concentrations (&gt;10 nM) decelerates activation kinetics and slightly increases peak amplitude without affecting deactivation kinetics. In vivo, does not cause death when intravenously injected into mice. In rat models, through its activity on Cav2.1/CACNA1A, has an ameliorative effect on memory defects provoked by hyperstimulation of N-methyl-D-aspartate receptors (NMDARs) in the hippocampus. The protein is Omega-lycotoxin-Am1g of Alopecosa marikovskyi (Wolf spider).